Here is a 1222-residue protein sequence, read N- to C-terminus: PAN2-PAN3 deadenylation complex catalytic subunit PAN2 (1222 aa).

2 WD repeats span residues 104–143 and 276–315; these read PEMTELRCMSFTAQPHKIIVAGLQSAMFIIDVEKGAIVDQ and ANVAFMLGLEVSPSGEALAINDAECSIHLWGSPSKIHFNE. The segment at 316–451 is linker; it reads IGKETEFSDI…GLKINGETKE (136 aa). The 370-residue stretch at 452 to 821 folds into the USP domain; it reads DPLLKYSNVE…SPCTLAYQIS (370 aa). Residues 871 to 1027 form the Exonuclease domain; that stretch reads ALDTEFVDLE…WAVFKEYIQE (157 aa). A divalent metal cation-binding residues include aspartate 873, glutamate 875, and aspartate 982. Positions 1035–1067 are disordered; the sequence is TSITTTTNPNIHDANTSTTTTTAITTTPPEGHD. Residues 1050–1061 show a composition bias toward low complexity; it reads TSTTTTTAITTT. An a divalent metal cation-binding site is contributed by aspartate 1071. Disordered stretches follow at residues 1110-1152 and 1167-1222; these read PARY…LSGR and ASVT…SPMR. The segment covering 1119–1133 has biased composition (low complexity); the sequence is PNPNNNNINNGVNPN. Residues 1134–1144 show a composition bias toward polar residues; that stretch reads GLSTPGSTNPI. A compositionally biased stretch (low complexity) spans 1180-1191; that stretch reads NGSMSGSTPSTP. The segment covering 1207 to 1216 has biased composition (gly residues); the sequence is SFGGAKGLTF.

It belongs to the peptidase C19 family. PAN2 subfamily. In terms of assembly, forms a heterotrimer with an asymmetric homodimer of the regulatory subunit PAN3 to form the poly(A)-nuclease (PAN) deadenylation complex. A divalent metal cation is required as a cofactor.

The protein localises to the cytoplasm. The enzyme catalyses Exonucleolytic cleavage of poly(A) to 5'-AMP.. With respect to regulation, positively regulated by the regulatory subunit PAN3. In terms of biological role, catalytic subunit of the poly(A)-nuclease (PAN) deadenylation complex, one of two cytoplasmic mRNA deadenylases involved in mRNA turnover. PAN specifically shortens poly(A) tails of RNA and the activity is stimulated by poly(A)-binding protein PAB1. PAN deadenylation is followed by rapid degradation of the shortened mRNA tails by the CCR4-NOT complex. Deadenylated mRNAs are then degraded by two alternative mechanisms, namely exosome-mediated 3'-5' exonucleolytic degradation, or deadenylation-dependent mRNA decaping and subsequent 5'-3' exonucleolytic degradation by XRN1. May also be involved in post-transcriptional maturation of mRNA poly(A) tails. The chain is PAN2-PAN3 deadenylation complex catalytic subunit PAN2 from Coccidioides immitis (strain RS) (Valley fever fungus).